Here is a 199-residue protein sequence, read N- to C-terminus: MKIGVIAIQGAVSEHVDALRRALAERGVEAEVVEIKHKGIVPECSGIVIPGGESTTLCRLLAREGIGEEIKEAAARGVPVLGTCAGLIVLAKEGDRQVEKTGQELLGIMDTRVNRNAFGRQRDSFEAELDVVILDSPFTGVFIRAPGIISCGPGVRVLSRLEDMIIAAEQGNVLALAFHPELTDDLRIHQYFLNKVLSC.

52-54 (GES) contributes to the L-glutamine binding site. C84 functions as the Nucleophile in the catalytic mechanism. Residues R115 and 143-144 (IR) contribute to the L-glutamine site. Residues H179 and E181 each act as charge relay system in the active site.

This sequence belongs to the glutaminase PdxT/SNO family. In terms of assembly, in the presence of PdxS, forms a dodecamer of heterodimers. Only shows activity in the heterodimer.

It catalyses the reaction aldehydo-D-ribose 5-phosphate + D-glyceraldehyde 3-phosphate + L-glutamine = pyridoxal 5'-phosphate + L-glutamate + phosphate + 3 H2O + H(+). The enzyme catalyses L-glutamine + H2O = L-glutamate + NH4(+). The protein operates within cofactor biosynthesis; pyridoxal 5'-phosphate biosynthesis. Catalyzes the hydrolysis of glutamine to glutamate and ammonia as part of the biosynthesis of pyridoxal 5'-phosphate. The resulting ammonia molecule is channeled to the active site of PdxS. The protein is Pyridoxal 5'-phosphate synthase subunit PdxT of Methanosarcina acetivorans (strain ATCC 35395 / DSM 2834 / JCM 12185 / C2A).